Consider the following 207-residue polypeptide: Large ribosomal subunit protein uL4 (207 aa).

The segment at 53–76 is disordered; it reads NRSAVRGGGRKPWRQKGTGRARQG. The span at 60–71 shows a compositional bias: basic residues; sequence GGRKPWRQKGTG.

This sequence belongs to the universal ribosomal protein uL4 family. As to quaternary structure, part of the 50S ribosomal subunit.

In terms of biological role, one of the primary rRNA binding proteins, this protein initially binds near the 5'-end of the 23S rRNA. It is important during the early stages of 50S assembly. It makes multiple contacts with different domains of the 23S rRNA in the assembled 50S subunit and ribosome. Forms part of the polypeptide exit tunnel. In Staphylococcus saprophyticus subsp. saprophyticus (strain ATCC 15305 / DSM 20229 / NCIMB 8711 / NCTC 7292 / S-41), this protein is Large ribosomal subunit protein uL4.